A 508-amino-acid chain; its full sequence is Glycerol kinase (508 aa).

T14 lines the ADP pocket. ATP-binding residues include T14, T15, and S16. A sn-glycerol 3-phosphate-binding site is contributed by T14. R18 provides a ligand contact to ADP. The sn-glycerol 3-phosphate site is built by R84, E85, Y136, and D245. Glycerol-binding residues include R84, E85, Y136, D245, and Q246. The ADP site is built by T267 and G314. ATP is bound by residues T267, G314, and Q318. Residue N419 participates in ADP binding.

Belongs to the FGGY kinase family.

It catalyses the reaction glycerol + ATP = sn-glycerol 3-phosphate + ADP + H(+). The protein operates within polyol metabolism; glycerol degradation via glycerol kinase pathway; sn-glycerol 3-phosphate from glycerol: step 1/1. With respect to regulation, inhibited by fructose 1,6-bisphosphate (FBP). Functionally, key enzyme in the regulation of glycerol uptake and metabolism. Catalyzes the phosphorylation of glycerol to yield sn-glycerol 3-phosphate. The sequence is that of Glycerol kinase from Bordetella pertussis (strain Tohama I / ATCC BAA-589 / NCTC 13251).